A 581-amino-acid polypeptide reads, in one-letter code: Serine/threonine-protein kinase SSN3 (581 aa).

A disordered region spans residues 34 to 57 (LWSQQQQQQLLDTKGSASTSKSPM). Over residues 48 to 57 (GSASTSKSPM) the composition is skewed to polar residues. Residues 85–475 (YEIIGYIAAG…AIDALEHEYF (391 aa)) enclose the Protein kinase domain. ATP contacts are provided by residues 91–99 (IAAGTYGKV) and K195. The active-site Proton acceptor is the D298.

Belongs to the protein kinase superfamily. CMGC Ser/Thr protein kinase family. CDC2/CDKX subfamily. As to quaternary structure, component of the SRB8-11 complex, a regulatory module of the Mediator complex. The cofactor is Mg(2+).

The protein localises to the nucleus. It carries out the reaction L-seryl-[protein] + ATP = O-phospho-L-seryl-[protein] + ADP + H(+). It catalyses the reaction L-threonyl-[protein] + ATP = O-phospho-L-threonyl-[protein] + ADP + H(+). The catalysed reaction is [DNA-directed RNA polymerase] + ATP = phospho-[DNA-directed RNA polymerase] + ADP + H(+). Functionally, component of the SRB8-11 complex. The SRB8-11 complex is a regulatory module of the Mediator complex which is itself involved in regulation of basal and activated RNA polymerase II-dependent transcription. The SRB8-11 complex may be involved in the transcriptional repression of a subset of genes regulated by Mediator. It may inhibit the association of the Mediator complex with RNA polymerase II to form the holoenzyme complex. The SRB8-11 complex phosphorylates the C-terminal domain (CTD) of the largest subunit of RNA polymerase II. The sequence is that of Serine/threonine-protein kinase SSN3 (SSN3) from Eremothecium gossypii (strain ATCC 10895 / CBS 109.51 / FGSC 9923 / NRRL Y-1056) (Yeast).